The following is an 822-amino-acid chain: Probable phosphoketolase (822 aa).

Belongs to the XFP family. Thiamine diphosphate is required as a cofactor.

In Lactococcus lactis subsp. lactis (strain IL1403) (Streptococcus lactis), this protein is Probable phosphoketolase.